The sequence spans 118 residues: Basic phospholipase A2 4 (118 aa).

Intrachain disulfides connect C11/C71, C27/C117, C29/C45, C44/C98, C51/C91, C60/C84, and C78/C89. The Ca(2+) site is built by Y28, G30, and G32. H48 is a catalytic residue. D49 contributes to the Ca(2+) binding site. D92 is an active-site residue.

Belongs to the phospholipase A2 family. Group I subfamily. D49 sub-subfamily. In terms of assembly, monomer. The cofactor is Ca(2+). In terms of tissue distribution, expressed by the venom gland.

It is found in the secreted. It carries out the reaction a 1,2-diacyl-sn-glycero-3-phosphocholine + H2O = a 1-acyl-sn-glycero-3-phosphocholine + a fatty acid + H(+). Functionally, PLA2 catalyzes the calcium-dependent hydrolysis of the 2-acyl groups in 3-sn-phosphoglycerides. The protein is Basic phospholipase A2 4 of Laticauda semifasciata (Black-banded sea krait).